A 121-amino-acid polypeptide reads, in one-letter code: Small ribosomal subunit protein bS6 (121 aa).

This sequence belongs to the bacterial ribosomal protein bS6 family.

In terms of biological role, binds together with bS18 to 16S ribosomal RNA. The protein is Small ribosomal subunit protein bS6 of Rickettsia peacockii (strain Rustic).